The sequence spans 250 residues: Small ribosomal subunit protein uS3 (250 aa).

The KH type-2 domain maps to 39-111; the sequence is IRTLIKNHYP…KIQINIFEVK (73 aa).

The protein belongs to the universal ribosomal protein uS3 family. As to quaternary structure, part of the 30S ribosomal subunit. Forms a tight complex with proteins S10 and S14.

Functionally, binds the lower part of the 30S subunit head. Binds mRNA in the 70S ribosome, positioning it for translation. This chain is Small ribosomal subunit protein uS3, found in Elm witches'-broom phytoplasma.